Consider the following 904-residue polypeptide: Auxilin-related protein 1 (904 aa).

Disordered stretches follow at residues 46 to 99 (AAGK…FDYD), 150 to 731 (SSIS…NLRK), and 749 to 776 (SASQ…RHQR). Basic and acidic residues predominate over residues 59 to 69 (DPGRDGDDLLF). Residues 81–95 (YGSSSGDSRSPSAPA) are compositionally biased toward low complexity. Over residues 178–188 (KGADSDREEKG) the composition is skewed to basic and acidic residues. The span at 201-215 (RTSSPPSKRTTSETT) shows a compositional bias: low complexity. A compositionally biased stretch (acidic residues) spans 232 to 244 (VEEDPFVVLEESE). A compositionally biased stretch (basic and acidic residues) spans 245 to 271 (STPREPSRTDPLDDIGKFNSRKTDHSS). Pro residues predominate over residues 370-383 (SAPPPTRPPPPRPT). Positions 394-419 (SIPTSAYHSHVPSSGRASVNSPTASQ) are enriched in polar residues. Residues 456 to 663 (SAAAMKDAMD…AAAEARGRAA (208 aa)) adopt a coiled-coil conformation. 2 stretches are compositionally biased toward basic and acidic residues: residues 462-570 (DAMD…EAHA) and 581-660 (TDAR…EARG). Residues 619–640 (REKAEKAAAEAKERANAEAREK) form the R domain. Low complexity predominate over residues 661-673 (RAAAQAKAKQQQE). Residues 674–697 (NTNDLDSFFSSISRPNSAPRQRTN) are compositionally biased toward polar residues. Residues 762–804 (ETEERRRARLERHQRTQERAAKALAEKNERDLQVQREQVEKDR) are a coiled coil. Over residues 764-776 (EERRRARLERHQR) the composition is skewed to basic and acidic residues. One can recognise a J domain in the interval 839–904 (CGWQPVSLTD…WNKFNSEELF (66 aa)).

In terms of assembly, interacts with SH3P1.

Its subcellular location is the cell membrane. The protein localises to the golgi apparatus. It localises to the trans-Golgi network. The protein resides in the endoplasmic reticulum. It is found in the cytoplasmic vesicle. Promotes uncoating of clathrin-coated vesicles. May interact directly with clathrin. In Arabidopsis thaliana (Mouse-ear cress), this protein is Auxilin-related protein 1.